The sequence spans 529 residues: Bifunctional purine biosynthesis protein PurH (529 aa).

One can recognise an MGS-like domain in the interval glutamine 2 to valine 148.

It belongs to the PurH family.

It carries out the reaction (6R)-10-formyltetrahydrofolate + 5-amino-1-(5-phospho-beta-D-ribosyl)imidazole-4-carboxamide = 5-formamido-1-(5-phospho-D-ribosyl)imidazole-4-carboxamide + (6S)-5,6,7,8-tetrahydrofolate. The enzyme catalyses IMP + H2O = 5-formamido-1-(5-phospho-D-ribosyl)imidazole-4-carboxamide. The protein operates within purine metabolism; IMP biosynthesis via de novo pathway; 5-formamido-1-(5-phospho-D-ribosyl)imidazole-4-carboxamide from 5-amino-1-(5-phospho-D-ribosyl)imidazole-4-carboxamide (10-formyl THF route): step 1/1. Its pathway is purine metabolism; IMP biosynthesis via de novo pathway; IMP from 5-formamido-1-(5-phospho-D-ribosyl)imidazole-4-carboxamide: step 1/1. This chain is Bifunctional purine biosynthesis protein PurH, found in Proteus mirabilis (strain HI4320).